Reading from the N-terminus, the 551-residue chain is Terpene synthase 10 (551 aa).

Residues Asp-303, Asp-307, and Glu-455 each coordinate Mg(2+). Positions 303–307 (DDIYD) match the DDXXD motif motif.

It belongs to the terpene synthase family. Requires Mg(2+) as cofactor.

Its function is as follows. Catalyzes the cyclization of farnesyl diphosphate to sesquiterpene olefins. This is Terpene synthase 10 (TPS10) from Ricinus communis (Castor bean).